A 657-amino-acid polypeptide reads, in one-letter code: LIM and SH3 domain protein Lasp (657 aa).

Residues 3–63 (KTCARCQKVV…EAHIPKAKAT (61 aa)) form the LIM zinc-binding domain. Nebulin repeat units lie at residues 64–95 (AIAD…KAKG) and 96–130 (KFTQ…KKAA). Disordered stretches follow at residues 130–151 (AMEK…EYFS), 164–223 (PTAS…PIQH), 235–257 (YQQL…QLHD), 294–318 (LYPT…QQQA), 332–415 (NSHH…SAAS), and 460–528 (KQHA…PKRI). The span at 140-150 (VSDSSNESEYF) shows a compositional bias: polar residues. 2 stretches are compositionally biased toward low complexity: residues 172–215 (AATT…QQQT) and 236–254 (QQLQ…QQQQ). Polar residues predominate over residues 332 to 341 (NSHHPSGNSV). Residues 342-357 (DQYDQPQQQQHQPQQQ) are compositionally biased toward low complexity. Residues 358-370 (STNPTLVAAQQQQ) show a composition bias toward polar residues. Residues 371 to 403 (SHHSLLNNNASNGGISHSHHSNINNNGHGSQNQ) are compositionally biased toward low complexity. Residues 460-475 (KQHASNGHMPNQQQQH) are compositionally biased toward polar residues. Phosphoserine is present on residues Ser-505 and Ser-530. A disordered region spans residues 548 to 592 (EQAHQQQKHQQYYQQVQMMQQQEHPPQQQQMRQQPSYSSLQEKQS). Residues 549–586 (QAHQQQKHQQYYQQVQMMQQQEHPPQQQQMRQQPSYSS) are compositionally biased toward low complexity. Residues 596-657 (TAMRVYRAIY…PANYVEQAVI (62 aa)) form the SH3 domain.

As to quaternary structure, interacts with osk.

This is LIM and SH3 domain protein Lasp from Drosophila melanogaster (Fruit fly).